A 204-amino-acid polypeptide reads, in one-letter code: Somatotropin (204 aa).

An N-terminal signal peptide occupies residues 1–17 (MDRVILLLSVVSLGVSS). Pyrrolidone carboxylic acid is present on glutamine 18. Histidine 36 contributes to the Zn(2+) binding site. A disulfide bridge connects residues cysteine 69 and cysteine 177. Glutamate 186 is a Zn(2+) binding site. The cysteines at positions 194 and 202 are disulfide-linked.

This sequence belongs to the somatotropin/prolactin family.

It is found in the secreted. Its function is as follows. Growth hormone plays an important role in growth control and is involved in the regulation of several anabolic processes. Implicated as an osmoregulatory substance important for seawater adaptation. The chain is Somatotropin (gh) from Sebastes schlegelii (Korean rockfish).